Consider the following 347-residue polypeptide: Quinolinate synthase (347 aa).

Iminosuccinate contacts are provided by histidine 47 and serine 68. Residue cysteine 113 participates in [4Fe-4S] cluster binding. Iminosuccinate is bound by residues 139-141 (YAN) and serine 156. Position 200 (cysteine 200) interacts with [4Fe-4S] cluster. Iminosuccinate contacts are provided by residues 226 to 228 (HPE) and threonine 243. Cysteine 297 lines the [4Fe-4S] cluster pocket.

The protein belongs to the quinolinate synthase family. Type 1 subfamily. [4Fe-4S] cluster is required as a cofactor.

The protein resides in the cytoplasm. The enzyme catalyses iminosuccinate + dihydroxyacetone phosphate = quinolinate + phosphate + 2 H2O + H(+). Its pathway is cofactor biosynthesis; NAD(+) biosynthesis; quinolinate from iminoaspartate: step 1/1. Functionally, catalyzes the condensation of iminoaspartate with dihydroxyacetone phosphate to form quinolinate. This is Quinolinate synthase from Shigella flexneri.